Reading from the N-terminus, the 132-residue chain is Small ribosomal subunit protein uS11 (132 aa).

This sequence belongs to the universal ribosomal protein uS11 family. In terms of assembly, part of the 30S ribosomal subunit. Interacts with proteins S7 and S18. Binds to IF-3.

Located on the platform of the 30S subunit, it bridges several disparate RNA helices of the 16S rRNA. Forms part of the Shine-Dalgarno cleft in the 70S ribosome. The polypeptide is Small ribosomal subunit protein uS11 (Dichelobacter nodosus (strain VCS1703A)).